The primary structure comprises 426 residues: Protein prenyltransferase alpha subunit repeat-containing protein 1 (426 aa).

PFTA repeat units lie at residues 86–119 (ALVDITSTLLLLNPDFTTAWNVRKELLQCGVLNP), 121–154 (KDLYLGKLALSKHPKSPETWIHRRWVLQRLQKEC), 180–213 (EEMRVCAEAAGRYPSNYNAWSHRIWVLQNMAKGN), and 219–252 (DELSSTRLWVSMHVSDHSGFHYRQHLLKALAKEL). Positions 255–279 (AAEKDVHTSQQPNGENTATASDDNH) are disordered. Over residues 262 to 275 (TSQQPNGENTATAS) the composition is skewed to polar residues. Residues 290–323 (EEIQLCTDLIESYPGHETLWCHRRHVFYLWHQWR) form a PFTA 5 repeat.

Belongs to the protein prenyltransferase subunit alpha family.

This Danio rerio (Zebrafish) protein is Protein prenyltransferase alpha subunit repeat-containing protein 1 (ptar1).